The following is a 1978-amino-acid chain: Dedicator of cytokinesis protein 4 (1978 aa).

The SH3 domain occupies 6 to 67 (EHEKYGVVIA…PSSYVHLKNA (62 aa)). At tyrosine 167 the chain carries Phosphotyrosine. The residue at position 193 (threonine 193) is a Phosphothreonine. Positions 401–574 (RNDLYITVER…ESFWITSFLC (174 aa)) constitute a C2 DOCK-type domain. In terms of domain architecture, DOCKER spans 1199 to 1605 (KTELNKEEMY…FGIQEFPACI (407 aa)). Serine 1608, serine 1616, serine 1623, serine 1627, serine 1629, and serine 1640 each carry phosphoserine. Disordered regions lie at residues 1657-1738 (SQAS…IYPT) and 1751-1978 (IGDG…VSQL). The segment covering 1681–1712 (PSPSTSSLSSTHSASPNVTSSAPSSARASPLL) has biased composition (low complexity). Residue serine 1778 is modified to Phosphoserine. Residues 1797 to 1803 (PPVPPRP) carry the SH3-binding motif. Polar residues predominate over residues 1804-1818 (TQTASPARHTTSVSP). A compositionally biased stretch (low complexity) spans 1842 to 1872 (SPGLSSNSPVLSGSYSSGISSLSRCSTSETS). A compositionally biased stretch (polar residues) spans 1873–1882 (GFENQANEQS). Positions 1885–1895 (VPVPVPVPVPV) are enriched in pro residues. Residues 1953 to 1966 (SHLENGTRRTEPGP) show a composition bias toward basic and acidic residues.

Belongs to the DOCK family. In terms of assembly, interacts with nucleotide-free Rap1; functions as a guanine nucleotide exchange factor (GEF) for Rap1. Interacts (via DOCKER domain) with RAC1; functions as a guanine nucleotide exchange factor (GEF) for RAC1. Interacts with the SH3 domain of CRK. Interacts with FASLG. Interacts with ELMO2 and EPHA2; mediates activation of RAC1 by EPHA2. Interacts with USH1C (via PDZ 1 domain). Expressed in inner ear (at protein level).

The protein resides in the cell membrane. Its subcellular location is the cytoplasm. The protein localises to the cytosol. Functionally, functions as a guanine nucleotide exchange factor (GEF) that promotes the exchange of GDP to GTP, converting inactive GDP-bound small GTPases into their active GTP-bound form. Involved in regulation of adherens junction between cells. Plays a role in cell migration. Has a higher guanine nucleotide exchange factor activity compared to other isoforms. The sequence is that of Dedicator of cytokinesis protein 4 (Dock4) from Mus musculus (Mouse).